The following is a 212-amino-acid chain: Cyclin-dependent kinase inhibitor 3 (212 aa).

Residues 1–12 (MKPPSSIQTSEF) show a composition bias toward polar residues. The tract at residues 1 to 20 (MKPPSSIQTSEFDSSDEEPI) is disordered. The tract at residues 1–34 (MKPPSSIQTSEFDSSDEEPIEDEQTPIHISWLSL) is interaction with CDK2. The region spanning 33 to 201 (SLSRVNCSQF…FRDKLAAHLS (169 aa)) is the Tyrosine-protein phosphatase domain. The active-site Phosphocysteine intermediate is C140.

Belongs to the protein-tyrosine phosphatase family. As to quaternary structure, interacts with cyclin-dependent kinases such as CDK1, CDK2 and CDK3. Does not interact with CDK4. Interacts (via C-terminus) with phosphorylated CDK2 (via C-terminal helix). Interacts with MS4A3 (via C-terminus); the interaction enhances CDKN3 enzymatic activity.

The protein localises to the cytoplasm. It is found in the perinuclear region. The enzyme catalyses O-phospho-L-tyrosyl-[protein] + H2O = L-tyrosyl-[protein] + phosphate. It carries out the reaction O-phospho-L-threonyl-[protein] + H2O = L-threonyl-[protein] + phosphate. The catalysed reaction is O-phospho-L-seryl-[protein] + H2O = L-seryl-[protein] + phosphate. In terms of biological role, may play a role in cell cycle regulation. Dual specificity CC phosphatase active toward substrates containing either phosphotyrosine or phosphoserine residues. Dephosphorylates CDK2 at 'Thr-160' in a cyclin-dependent manner. The protein is Cyclin-dependent kinase inhibitor 3 of Homo sapiens (Human).